A 285-amino-acid polypeptide reads, in one-letter code: 2-dehydro-3-deoxyphosphooctonate aldolase (285 aa).

It belongs to the KdsA family.

The protein resides in the cytoplasm. The enzyme catalyses D-arabinose 5-phosphate + phosphoenolpyruvate + H2O = 3-deoxy-alpha-D-manno-2-octulosonate-8-phosphate + phosphate. It participates in carbohydrate biosynthesis; 3-deoxy-D-manno-octulosonate biosynthesis; 3-deoxy-D-manno-octulosonate from D-ribulose 5-phosphate: step 2/3. The protein operates within bacterial outer membrane biogenesis; lipopolysaccharide biosynthesis. The polypeptide is 2-dehydro-3-deoxyphosphooctonate aldolase (Acidovorax sp. (strain JS42)).